The following is a 94-amino-acid chain: Large ribosomal subunit protein bL25 (94 aa).

Belongs to the bacterial ribosomal protein bL25 family. As to quaternary structure, part of the 50S ribosomal subunit; part of the 5S rRNA/L5/L18/L25 subcomplex. Contacts the 5S rRNA. Binds to the 5S rRNA independently of L5 and L18.

In terms of biological role, this is one of the proteins that binds to the 5S RNA in the ribosome where it forms part of the central protuberance. The protein is Large ribosomal subunit protein bL25 of Pectobacterium atrosepticum (strain SCRI 1043 / ATCC BAA-672) (Erwinia carotovora subsp. atroseptica).